A 147-amino-acid polypeptide reads, in one-letter code: Large ribosomal subunit protein uL13 (147 aa).

The disordered stretch occupies residues 128 to 147; it reads PEHPHSAQQPVPYELKQVAQ.

This sequence belongs to the universal ribosomal protein uL13 family. In terms of assembly, part of the 50S ribosomal subunit.

This protein is one of the early assembly proteins of the 50S ribosomal subunit, although it is not seen to bind rRNA by itself. It is important during the early stages of 50S assembly. This chain is Large ribosomal subunit protein uL13, found in Mycobacterium bovis (strain BCG / Pasteur 1173P2).